A 338-amino-acid chain; its full sequence is MRFKGLDLNLLVALDALMTERNLTAAARKINLSQPAMSAAIARLRSYFRDELFTMRGRELVLTPGAEALAGPVREALLHIQLSIISRDAFDPAQSSRRFRVILSDFMTIVFFRRIVDRIAQEAPAVRFELLPFSDEPSELLRRGEVDFLILPELFMSSAHPKATLFDETLVCVGCPTNKQLSRPLTFEKYNSMGHVTAQFGRALRPNLEEWFLLEHGLKRRIEVVVQGFSLIPPILLDTSRIGTMPLRLARHFEKRMPLQIVEPPLPLPTFTEAVQWPAFHNTDPASIWMRRILLEEASNMASEHREPPTPQARLDSRPRRCKNILINHSTAWPASSF.

An HTH lysR-type domain is found at 6-63; the sequence is LDLNLLVALDALMTERNLTAAARKINLSQPAMSAAIARLRSYFRDELFTMRGRELVLT. A DNA-binding region (H-T-H motif) is located at residues 23 to 42; it reads LTAAARKINLSQPAMSAAIA.

This sequence belongs to the LysR transcriptional regulatory family.

Functionally, nodD regulates the expression of the nodABCFE genes which encode other nodulation proteins. NodD is also a negative regulator of its own expression. Binds flavonoids as inducers. The protein is Nodulation protein D (nodD) of Bradyrhizobium sp. (strain ANU 289).